A 154-amino-acid chain; its full sequence is Protein X (154 aa).

A mitochondrial targeting sequence region spans residues 68–117; the sequence is PCALRFTSARCMETTVNAHQILPKVLHKRTLGLPAMSTTDLEAYFKDSVF.

It belongs to the orthohepadnavirus protein X family. In terms of assembly, may form homodimer. May interact with host CEBPA, CFLAR, CREB1, DDB1, E4F1, HBXIP, HSPD1/HSP60, NFKBIA, POLR2E and SMAD4. Interacts with host SMC5-SMC6 complex and induces its degradation. Interacts with host TRPC4AP; leading to prevent ubiquitination of TRPC4AP. Interacts with host PLSCR1; this interaction promotes ubiquitination and degradation of HBx and impairs HBx-mediated cell proliferation. A fraction may be phosphorylated in insect cells and HepG2 cells, a human hepatoblastoma cell line. Phosphorylated in vitro by host protein kinase C or mitogen-activated protein kinase. N-acetylated in insect cells.

It is found in the host cytoplasm. It localises to the host nucleus. The protein localises to the host mitochondrion. Its function is as follows. Multifunctional protein that plays a role in silencing host antiviral defenses and promoting viral transcription. Does not seem to be essential for HBV infection. May be directly involved in development of cirrhosis and liver cancer (hepatocellular carcinoma). Most of cytosolic activities involve modulation of cytosolic calcium. The effect on apoptosis is controversial depending on the cell types in which the studies have been conducted. May induce apoptosis by localizing in mitochondria and causing loss of mitochondrial membrane potential. May also modulate apoptosis by binding host CFLAR, a key regulator of the death-inducing signaling complex (DISC). Promotes viral transcription by using the host E3 ubiquitin ligase DDB1 to target the SMC5-SMC6 complex to proteasomal degradation. This host complex would otherwise bind to viral episomal DNA, and prevents its transcription. Moderately stimulates transcription of many different viral and cellular transcription elements. Promoters and enhancers stimulated by HBx contain DNA binding sites for NF-kappa-B, AP-1, AP-2, c-EBP, ATF/CREB, or the calcium-activated factor NF-AT. This Homo sapiens (Human) protein is Protein X.